The primary structure comprises 208 residues: ATP synthase subunit b (208 aa).

The signal sequence occupies residues 1 to 27 (MVKAKKLVFKWSLLVFSFFTLSLFLVS). Cys28 carries the N-palmitoyl cysteine lipid modification. The S-diacylglycerol cysteine moiety is linked to residue Cys28. Residues 49–69 (WVFITHLLAFFILLTLMIFLF) traverse the membrane as a helical segment.

Belongs to the ATPase B chain family. F-type ATPases have 2 components, F(1) - the catalytic core - and F(0) - the membrane proton channel. F(1) has five subunits: alpha(3), beta(3), gamma(1), delta(1), epsilon(1). F(0) has three main subunits: a(1), b(2) and c(10-14). The alpha and beta chains form an alternating ring which encloses part of the gamma chain. F(1) is attached to F(0) by a central stalk formed by the gamma and epsilon chains, while a peripheral stalk is formed by the delta and b chains.

The protein resides in the cell membrane. Functionally, f(1)F(0) ATP synthase produces ATP from ADP in the presence of a proton or sodium gradient. F-type ATPases consist of two structural domains, F(1) containing the extramembraneous catalytic core and F(0) containing the membrane proton channel, linked together by a central stalk and a peripheral stalk. During catalysis, ATP synthesis in the catalytic domain of F(1) is coupled via a rotary mechanism of the central stalk subunits to proton translocation. Component of the F(0) channel, it forms part of the peripheral stalk, linking F(1) to F(0). The sequence is that of ATP synthase subunit b from Mycoplasma genitalium (strain ATCC 33530 / DSM 19775 / NCTC 10195 / G37) (Mycoplasmoides genitalium).